Here is a 369-residue protein sequence, read N- to C-terminus: 2-aminoethylphosphonate--pyruvate transaminase (369 aa).

Lys-193 is subject to N6-(pyridoxal phosphate)lysine.

The protein belongs to the class-V pyridoxal-phosphate-dependent aminotransferase family. PhnW subfamily. In terms of assembly, homodimer. Pyridoxal 5'-phosphate is required as a cofactor.

It catalyses the reaction (2-aminoethyl)phosphonate + pyruvate = phosphonoacetaldehyde + L-alanine. Involved in phosphonate degradation. This chain is 2-aminoethylphosphonate--pyruvate transaminase, found in Burkholderia pseudomallei (strain 668).